The sequence spans 317 residues: Tricarboxylate transport protein B, mitochondrial (317 aa).

The propeptide at 1–20 (MSGSPKFVSPFHRPHCLSAA) is removed in mature form. 3 Solcar repeats span residues 29–117 (THPG…LSNQ), 128–214 (TRGL…LRNW), and 224–309 (INPV…VVKV). Transmembrane regions (helical) follow at residues 35–55 (ILAG…TEYV), 130–150 (GLIC…CPME), 223–243 (SINP…SVFG), and 294–314 (MDVA…NKVW).

The protein belongs to the mitochondrial carrier (TC 2.A.29) family. Post-translationally, possesses a short cleavable presequence, which, however, is found to be dispensable both for targeting to mitochondria and insertion into the inner membrane. However, the presequence is required to keep SLC25A1 in a soluble state and thus in an import-competent state. Mature SLC25A1 lacking the presequence is prone to aggregation.

The protein localises to the mitochondrion inner membrane. The catalysed reaction is (S)-malate(in) + citrate(out) = (S)-malate(out) + citrate(in). It carries out the reaction D-threo-isocitrate(in) + citrate(out) = D-threo-isocitrate(out) + citrate(in). It catalyses the reaction citrate(out) + succinate(in) = citrate(in) + succinate(out). The enzyme catalyses cis-aconitate(in) + citrate(out) = cis-aconitate(out) + citrate(in). The catalysed reaction is trans-aconitate(in) + citrate(out) = trans-aconitate(out) + citrate(in). It carries out the reaction phosphoenolpyruvate(in) + citrate(out) = phosphoenolpyruvate(out) + citrate(in). It catalyses the reaction maleate(in) + citrate(out) = maleate(out) + citrate(in). Functionally, mitochondrial electroneutral antiporter that exports citrate from the mitochondria into the cytosol in exchange for malate. Also able to mediate the exchange of citrate for isocitrate, phosphoenolpyruvate, cis-aconitate and to a lesser extent trans-aconitate, maleate and succinate. In the cytoplasm, citrate plays important roles in fatty acid and sterol synthesis, regulation of glycolysis, protein acetylation, and other physiopathological processes. The sequence is that of Tricarboxylate transport protein B, mitochondrial from Danio rerio (Zebrafish).